We begin with the raw amino-acid sequence, 386 residues long: 23S rRNA (uracil(747)-C(5))-methyltransferase RlmC (386 aa).

Positions 7, 15, 18, and 94 each coordinate [4Fe-4S] cluster. S-adenosyl-L-methionine is bound by residues Gln-219, Phe-248, Glu-269, and Asn-316. Residue Cys-343 is the Nucleophile of the active site.

It belongs to the class I-like SAM-binding methyltransferase superfamily. RNA M5U methyltransferase family. RlmC subfamily.

It carries out the reaction uridine(747) in 23S rRNA + S-adenosyl-L-methionine = 5-methyluridine(747) in 23S rRNA + S-adenosyl-L-homocysteine + H(+). Catalyzes the formation of 5-methyl-uridine at position 747 (m5U747) in 23S rRNA. This is 23S rRNA (uracil(747)-C(5))-methyltransferase RlmC from Shewanella oneidensis (strain ATCC 700550 / JCM 31522 / CIP 106686 / LMG 19005 / NCIMB 14063 / MR-1).